A 448-amino-acid polypeptide reads, in one-letter code: MSESSAINGNHYEQLHQGRTKMYKSKVAVVLGAQWGDEGKGKVVDMLASDVDIVCRCQGGNNAGHTVVANGTEFDFHLLPSGVVNEKCVSVIGNGVVIHLPSLFDEVLKNEAKGLQHLENRLIISDRAHLVFDFHQHVDGMQEAEKGGKSLGTTKKGIGPAYSSKATRNGIRVGELLGDFNLFSDKFKSIVATHVRLFPSINVDVEAELARYKDYAEKVRPYVKDTICFLHTALRNGKTILVEGANAAMLDIDFGTYPYVTSSNCSIGGVLTGLGLPPQTIGEVIGVVKAYTTRVGDGPFPTEQLNDIGDLLQTRGFEIGVTTKRKRRCGWLDIPLLKYTSLVNGYTCICITKLDILDTLPEIKVAVAYKKPNGEKLDHFPGTIAELGAIEVEYAVLPGWQTSTEHIRNFKELPENAQNYVRFLESELSVPVRWVGVGKGRESIINVH.

Residues 36–42 (GDEGKGK) and 64–66 (GHT) each bind GTP. Asp-37 functions as the Proton acceptor in the catalytic mechanism. Positions 37 and 64 each coordinate Mg(2+). IMP contacts are provided by residues 37–40 (DEGK), 62–65 (NAGH), Thr-154, Arg-168, Asn-246, Thr-261, and Arg-325. The Proton donor role is filled by His-65. 321–327 (VTTKRKR) provides a ligand contact to substrate. GTP is bound by residues Arg-327, 353-355 (KLD), and 436-438 (GVG).

The protein belongs to the adenylosuccinate synthetase family. Homodimer. The cofactor is Mg(2+).

The protein localises to the cytoplasm. The catalysed reaction is IMP + L-aspartate + GTP = N(6)-(1,2-dicarboxyethyl)-AMP + GDP + phosphate + 2 H(+). Its pathway is purine metabolism; AMP biosynthesis via de novo pathway; AMP from IMP: step 1/2. Functionally, plays an important role in the de novo pathway and in the salvage pathway of purine nucleotide biosynthesis. Catalyzes the first committed step in the biosynthesis of AMP from IMP. The chain is Adenylosuccinate synthetase from Drosophila ananassae (Fruit fly).